We begin with the raw amino-acid sequence, 484 residues long: UDP-N-acetylmuramate--L-alanine ligase (484 aa).

Position 125–131 (Gly-125–Thr-131) interacts with ATP.

This sequence belongs to the MurCDEF family.

Its subcellular location is the cytoplasm. The catalysed reaction is UDP-N-acetyl-alpha-D-muramate + L-alanine + ATP = UDP-N-acetyl-alpha-D-muramoyl-L-alanine + ADP + phosphate + H(+). Its pathway is cell wall biogenesis; peptidoglycan biosynthesis. Its function is as follows. Cell wall formation. This Buchnera aphidicola subsp. Acyrthosiphon pisum (strain 5A) protein is UDP-N-acetylmuramate--L-alanine ligase.